Consider the following 573-residue polypeptide: Isocitrate dehydrogenase kinase/phosphatase (573 aa).

Residues 317 to 323 (APGVRGM) and Lys338 each bind ATP. Asp373 is a catalytic residue.

This sequence belongs to the AceK family.

Its subcellular location is the cytoplasm. The enzyme catalyses L-seryl-[isocitrate dehydrogenase] + ATP = O-phospho-L-seryl-[isocitrate dehydrogenase] + ADP + H(+). Its function is as follows. Bifunctional enzyme which can phosphorylate or dephosphorylate isocitrate dehydrogenase (IDH) on a specific serine residue. This is a regulatory mechanism which enables bacteria to bypass the Krebs cycle via the glyoxylate shunt in response to the source of carbon. When bacteria are grown on glucose, IDH is fully active and unphosphorylated, but when grown on acetate or ethanol, the activity of IDH declines drastically concomitant with its phosphorylation. This Pseudomonas fluorescens (strain Pf0-1) protein is Isocitrate dehydrogenase kinase/phosphatase.